Here is a 356-residue protein sequence, read N- to C-terminus: Dual-specificity RNA methyltransferase RlmN (356 aa).

Catalysis depends on glutamate 92, which acts as the Proton acceptor. One can recognise a Radical SAM core domain in the interval 98-334 (EKDRGTLCIS…MRRTRGEDID (237 aa)). Residues cysteine 105 and cysteine 337 are joined by a disulfide bond. Residues cysteine 112, cysteine 116, and cysteine 119 each coordinate [4Fe-4S] cluster. S-adenosyl-L-methionine contacts are provided by residues 162 to 163 (GE), serine 194, 216 to 218 (SLH), and asparagine 294. Cysteine 337 acts as the S-methylcysteine intermediate in catalysis.

The protein belongs to the radical SAM superfamily. RlmN family. [4Fe-4S] cluster serves as cofactor.

The protein resides in the cytoplasm. It carries out the reaction adenosine(2503) in 23S rRNA + 2 reduced [2Fe-2S]-[ferredoxin] + 2 S-adenosyl-L-methionine = 2-methyladenosine(2503) in 23S rRNA + 5'-deoxyadenosine + L-methionine + 2 oxidized [2Fe-2S]-[ferredoxin] + S-adenosyl-L-homocysteine. It catalyses the reaction adenosine(37) in tRNA + 2 reduced [2Fe-2S]-[ferredoxin] + 2 S-adenosyl-L-methionine = 2-methyladenosine(37) in tRNA + 5'-deoxyadenosine + L-methionine + 2 oxidized [2Fe-2S]-[ferredoxin] + S-adenosyl-L-homocysteine. Its function is as follows. Specifically methylates position 2 of adenine 2503 in 23S rRNA and position 2 of adenine 37 in tRNAs. m2A2503 modification seems to play a crucial role in the proofreading step occurring at the peptidyl transferase center and thus would serve to optimize ribosomal fidelity. The chain is Dual-specificity RNA methyltransferase RlmN from Vesicomyosocius okutanii subsp. Calyptogena okutanii (strain HA).